The chain runs to 548 residues: ATP synthase subunit alpha (548 aa).

Residue 172-179 (GDRKTGKT) coordinates ATP. Positions 510-548 (QFTTSSGESAAPSEPEAEALAADEVGQETVKVNRPAPKK) are disordered. Positions 514–531 (SSGESAAPSEPEAEALAA) are enriched in low complexity.

Belongs to the ATPase alpha/beta chains family. In terms of assembly, F-type ATPases have 2 components, CF(1) - the catalytic core - and CF(0) - the membrane proton channel. CF(1) has five subunits: alpha(3), beta(3), gamma(1), delta(1), epsilon(1). CF(0) has three main subunits: a(1), b(2) and c(9-12). The alpha and beta chains form an alternating ring which encloses part of the gamma chain. CF(1) is attached to CF(0) by a central stalk formed by the gamma and epsilon chains, while a peripheral stalk is formed by the delta and b chains.

The protein resides in the cell membrane. The catalysed reaction is ATP + H2O + 4 H(+)(in) = ADP + phosphate + 5 H(+)(out). Functionally, produces ATP from ADP in the presence of a proton gradient across the membrane. The alpha chain is a regulatory subunit. The polypeptide is ATP synthase subunit alpha (Saccharopolyspora erythraea (strain ATCC 11635 / DSM 40517 / JCM 4748 / NBRC 13426 / NCIMB 8594 / NRRL 2338)).